Reading from the N-terminus, the 396-residue chain is Apurinic-apyrimidinic endonuclease (396 aa).

Residues Lys31–Gln41 are compositionally biased toward basic residues. A disordered region spans residues Lys31–Lys100. Residues Asn55–Asn70 show a composition bias toward polar residues. Residues Ser72–Pro85 show a composition bias toward basic and acidic residues. Residues His185, His225, Glu261, Asp295, His298, His332, Asp345, His347, and Glu377 each contribute to the Zn(2+) site.

This sequence belongs to the AP endonuclease 2 family. Zn(2+) serves as cofactor.

It is found in the nucleus. The polypeptide is Apurinic-apyrimidinic endonuclease (apn-1) (Caenorhabditis elegans).